We begin with the raw amino-acid sequence, 356 residues long: Tyrosine recombinase XerS (356 aa).

The region spanning 16-121 (LMPWYVLEYY…ALSSLYKYLT (106 aa)) is the Core-binding (CB) domain. One can recognise a Tyr recombinase domain in the interval 169 to 354 (GFLTYIDQEH…VNDEQKNALD (186 aa)). Catalysis depends on residues R210, K234, H306, R309, and H332. Y341 acts as the O-(3'-phospho-DNA)-tyrosine intermediate in catalysis.

The protein belongs to the 'phage' integrase family. XerS subfamily.

It is found in the cytoplasm. Its activity is regulated as follows. FtsK is required for recombination. Site-specific tyrosine recombinase, which acts by catalyzing the cutting and rejoining of the recombining DNA molecules. Essential to convert dimers of the bacterial chromosome into monomers to permit their segregation at cell division. The protein is Tyrosine recombinase XerS of Streptococcus pneumoniae serotype 2 (strain D39 / NCTC 7466).